Here is a 740-residue protein sequence, read N- to C-terminus: UvrABC system protein B (740 aa).

The tract at residues 1–36 (MTIAIRTTLDEPENHSDFVPHRPSRPEKTEPSKPFR) is disordered. Residues 8-33 (TLDEPENHSDFVPHRPSRPEKTEPSK) show a composition bias toward basic and acidic residues. Positions 56–444 (KDIQKGERDQ…GGVFVEQIIR (389 aa)) constitute a Helicase ATP-binding domain. 69–76 (GVTGSGKT) contributes to the ATP binding site. The short motif at 122–145 (YYDYYQPEAYVPRTDTYIEKDSAI) is the Beta-hairpin element. A Helicase C-terminal domain is found at 461-627 (QVDNLIFEAK…TVKRQVDDIV (167 aa)). Residues 651-686 (ARSISETEKEMLEAAANLEFEKAAQLRDVLHQLKRQ) enclose the UVR domain. The interval 687–740 (ELGLPPEKSSEIQGRSEAGRPGTRKTRSDKAREAKASKRVKQEAGEKLLRSRGH) is disordered. Residues 712-740 (TRSDKAREAKASKRVKQEAGEKLLRSRGH) are compositionally biased toward basic and acidic residues.

This sequence belongs to the UvrB family. As to quaternary structure, forms a heterotetramer with UvrA during the search for lesions. Interacts with UvrC in an incision complex.

Its subcellular location is the cytoplasm. In terms of biological role, the UvrABC repair system catalyzes the recognition and processing of DNA lesions. A damage recognition complex composed of 2 UvrA and 2 UvrB subunits scans DNA for abnormalities. Upon binding of the UvrA(2)B(2) complex to a putative damaged site, the DNA wraps around one UvrB monomer. DNA wrap is dependent on ATP binding by UvrB and probably causes local melting of the DNA helix, facilitating insertion of UvrB beta-hairpin between the DNA strands. Then UvrB probes one DNA strand for the presence of a lesion. If a lesion is found the UvrA subunits dissociate and the UvrB-DNA preincision complex is formed. This complex is subsequently bound by UvrC and the second UvrB is released. If no lesion is found, the DNA wraps around the other UvrB subunit that will check the other stand for damage. The protein is UvrABC system protein B of Zymomonas mobilis subsp. mobilis (strain ATCC 31821 / ZM4 / CP4).